The sequence spans 306 residues: Ornithine carbamoyltransferase (306 aa).

Carbamoyl phosphate is bound by residues 51 to 54 (STRT), Gln78, Arg102, and 129 to 132 (HPCQ). L-ornithine is bound by residues Asn160, Asp223, and 227–228 (SM). Carbamoyl phosphate contacts are provided by residues 263–264 (CL) and Arg291.

Belongs to the aspartate/ornithine carbamoyltransferase superfamily. OTCase family.

The protein localises to the cytoplasm. The catalysed reaction is carbamoyl phosphate + L-ornithine = L-citrulline + phosphate + H(+). Its pathway is amino-acid biosynthesis; L-arginine biosynthesis; L-arginine from L-ornithine and carbamoyl phosphate: step 1/3. Reversibly catalyzes the transfer of the carbamoyl group from carbamoyl phosphate (CP) to the N(epsilon) atom of ornithine (ORN) to produce L-citrulline. The protein is Ornithine carbamoyltransferase of Nostoc sp. (strain PCC 7120 / SAG 25.82 / UTEX 2576).